The chain runs to 132 residues: Large-conductance mechanosensitive channel (132 aa).

3 helical membrane-spanning segments follow: residues 14–34 (VIDLAVGVVIGAAFGKIVSSL), 38–58 (IITPLLGMVLGGVDFTGLKIT), and 69–89 (FIQTIFDFLIIAAAIFMFVKV).

The protein belongs to the MscL family. Homopentamer.

The protein localises to the cell membrane. Channel that opens in response to stretch forces in the membrane lipid bilayer. May participate in the regulation of osmotic pressure changes within the cell. In Bacillus thuringiensis (strain Al Hakam), this protein is Large-conductance mechanosensitive channel.